Reading from the N-terminus, the 104-residue chain is Integration host factor subunit alpha (104 aa).

This sequence belongs to the bacterial histone-like protein family. Heterodimer of an alpha and a beta chain.

Its function is as follows. This protein is one of the two subunits of integration host factor, a specific DNA-binding protein that functions in genetic recombination as well as in transcriptional and translational control. The protein is Integration host factor subunit alpha of Methylobacterium sp. (strain 4-46).